A 128-amino-acid polypeptide reads, in one-letter code: Large ribosomal subunit protein bL12c (128 aa).

This sequence belongs to the bacterial ribosomal protein bL12 family. Homodimer. Part of the ribosomal stalk of the 50S ribosomal subunit. Forms a multimeric L10(L12)X complex, where L10 forms an elongated spine to which 2 to 4 L12 dimers bind in a sequential fashion. Binds GTP-bound translation factors.

It is found in the plastid. The protein localises to the chloroplast. Functionally, forms part of the ribosomal stalk which helps the ribosome interact with GTP-bound translation factors. Is thus essential for accurate translation. This chain is Large ribosomal subunit protein bL12c, found in Phaeodactylum tricornutum (strain CCAP 1055/1).